The primary structure comprises 143 residues: Actin-depolymerizing factor (143 aa).

The ADF-H domain occupies 11-143 (GMGVADHSKN…DLEVLRERAH (133 aa)).

It belongs to the actin-binding proteins ADF family.

In terms of biological role, actin-depolymerizing protein. Severs actin filaments (F-actin) and binds to actin monomers. This is Actin-depolymerizing factor from Vitis vinifera (Grape).